The following is an 87-amino-acid chain: Small ribosomal subunit protein uS17 (87 aa).

It belongs to the universal ribosomal protein uS17 family. As to quaternary structure, part of the 30S ribosomal subunit.

One of the primary rRNA binding proteins, it binds specifically to the 5'-end of 16S ribosomal RNA. In Bacillus cereus (strain ATCC 14579 / DSM 31 / CCUG 7414 / JCM 2152 / NBRC 15305 / NCIMB 9373 / NCTC 2599 / NRRL B-3711), this protein is Small ribosomal subunit protein uS17.